Reading from the N-terminus, the 130-residue chain is Small ribosomal subunit protein uS9 (130 aa).

The protein belongs to the universal ribosomal protein uS9 family.

This chain is Small ribosomal subunit protein uS9, found in Burkholderia mallei (strain NCTC 10247).